Here is a 212-residue protein sequence, read N- to C-terminus: Thiamine-phosphate synthase (212 aa).

4-amino-2-methyl-5-(diphosphooxymethyl)pyrimidine-binding positions include 40-44 (QFREK) and Asn75. Residues Asp76 and Asp95 each contribute to the Mg(2+) site. Ser113 contacts 4-amino-2-methyl-5-(diphosphooxymethyl)pyrimidine. 139 to 141 (TPS) contacts 2-[(2R,5Z)-2-carboxy-4-methylthiazol-5(2H)-ylidene]ethyl phosphate. Lys142 is a 4-amino-2-methyl-5-(diphosphooxymethyl)pyrimidine binding site. 2-[(2R,5Z)-2-carboxy-4-methylthiazol-5(2H)-ylidene]ethyl phosphate contacts are provided by residues Gly171 and 191-192 (IS).

It belongs to the thiamine-phosphate synthase family. It depends on Mg(2+) as a cofactor.

It catalyses the reaction 2-[(2R,5Z)-2-carboxy-4-methylthiazol-5(2H)-ylidene]ethyl phosphate + 4-amino-2-methyl-5-(diphosphooxymethyl)pyrimidine + 2 H(+) = thiamine phosphate + CO2 + diphosphate. The catalysed reaction is 2-(2-carboxy-4-methylthiazol-5-yl)ethyl phosphate + 4-amino-2-methyl-5-(diphosphooxymethyl)pyrimidine + 2 H(+) = thiamine phosphate + CO2 + diphosphate. It carries out the reaction 4-methyl-5-(2-phosphooxyethyl)-thiazole + 4-amino-2-methyl-5-(diphosphooxymethyl)pyrimidine + H(+) = thiamine phosphate + diphosphate. The protein operates within cofactor biosynthesis; thiamine diphosphate biosynthesis; thiamine phosphate from 4-amino-2-methyl-5-diphosphomethylpyrimidine and 4-methyl-5-(2-phosphoethyl)-thiazole: step 1/1. In terms of biological role, condenses 4-methyl-5-(beta-hydroxyethyl)thiazole monophosphate (THZ-P) and 2-methyl-4-amino-5-hydroxymethyl pyrimidine pyrophosphate (HMP-PP) to form thiamine monophosphate (TMP). The sequence is that of Thiamine-phosphate synthase from Staphylococcus carnosus (strain TM300).